Consider the following 256-residue polypeptide: 6-carboxyhexanoate--CoA ligase (256 aa).

This sequence belongs to the BioW family. In terms of assembly, homodimer. The cofactor is Mg(2+).

It carries out the reaction heptanedioate + ATP + CoA = 6-carboxyhexanoyl-CoA + AMP + diphosphate. It functions in the pathway metabolic intermediate metabolism; pimeloyl-CoA biosynthesis; pimeloyl-CoA from pimelate: step 1/1. Functionally, catalyzes the transformation of pimelate into pimeloyl-CoA with concomitant hydrolysis of ATP to AMP. In Bacillus velezensis (strain DSM 23117 / BGSC 10A6 / LMG 26770 / FZB42) (Bacillus amyloliquefaciens subsp. plantarum), this protein is 6-carboxyhexanoate--CoA ligase.